The primary structure comprises 254 residues: 5-oxoprolinase subunit A (254 aa).

The protein belongs to the LamB/PxpA family. Forms a complex composed of PxpA, PxpB and PxpC.

It carries out the reaction 5-oxo-L-proline + ATP + 2 H2O = L-glutamate + ADP + phosphate + H(+). Functionally, catalyzes the cleavage of 5-oxoproline to form L-glutamate coupled to the hydrolysis of ATP to ADP and inorganic phosphate. The polypeptide is 5-oxoprolinase subunit A (Burkholderia thailandensis (strain ATCC 700388 / DSM 13276 / CCUG 48851 / CIP 106301 / E264)).